An 88-amino-acid chain; its full sequence is Small ribosomal subunit protein bS20 (88 aa).

The protein belongs to the bacterial ribosomal protein bS20 family.

Functionally, binds directly to 16S ribosomal RNA. The sequence is that of Small ribosomal subunit protein bS20 from Oenococcus oeni (strain ATCC BAA-331 / PSU-1).